A 432-amino-acid polypeptide reads, in one-letter code: Adenylosuccinate synthetase (432 aa).

GTP is bound by residues 13–19 (GDEGKGK) and 41–43 (GHT). Catalysis depends on D14, which acts as the Proton acceptor. Mg(2+)-binding residues include D14 and G41. IMP contacts are provided by residues 14 to 17 (DEGK), 39 to 42 (NAGH), T130, R144, Q225, T240, and R304. The Proton donor role is filled by H42. A substrate-binding site is contributed by 300–306 (ATTGRRR). GTP contacts are provided by residues R306, 332–334 (KLD), and 415–417 (STG).

It belongs to the adenylosuccinate synthetase family. Homodimer. Mg(2+) serves as cofactor.

It is found in the cytoplasm. The enzyme catalyses IMP + L-aspartate + GTP = N(6)-(1,2-dicarboxyethyl)-AMP + GDP + phosphate + 2 H(+). It participates in purine metabolism; AMP biosynthesis via de novo pathway; AMP from IMP: step 1/2. Plays an important role in the de novo pathway of purine nucleotide biosynthesis. Catalyzes the first committed step in the biosynthesis of AMP from IMP. The polypeptide is Adenylosuccinate synthetase (Salmonella agona (strain SL483)).